The chain runs to 699 residues: Receptor-type tyrosine-protein phosphatase epsilon (699 aa).

The first 22 residues, 1 to 22 (MEPFCPLLLASFSLSLATAGQG), serve as a signal peptide directing secretion. The span at 20 to 36 (GQGNDTTPTESNWTSTT) shows a compositional bias: low complexity. Residues 20–41 (GQGNDTTPTESNWTSTTAGPPD) are disordered. Asn23 and Asn31 each carry an N-linked (GlcNAc...) asparagine glycan. The Extracellular portion of the chain corresponds to 23-47 (NDTTPTESNWTSTTAGPPDPGTSQP). The helical transmembrane segment at 48–68 (LLTWLLLPLLLLLFLLAAYFF) threads the bilayer. Residues 69–699 (RFRKQRKAVV…DIFSDYANFK (631 aa)) lie on the Cytoplasmic side of the membrane. Tyrosine-protein phosphatase domains follow at residues 134-393 (FREE…LLEY) and 425-688 (LEEE…VQDF). Substrate contacts are provided by residues Asp302, 334-340 (CSAGVGR), and Gln378. The active-site Phosphocysteine intermediate is Cys334. Cys629 acts as the Phosphocysteine intermediate in catalysis. At Tyr695 the chain carries Phosphotyrosine.

Belongs to the protein-tyrosine phosphatase family. Receptor class 4 subfamily. Monomer. Isoform 2: Homodimer. Can form oligomers. Dimerization is increased by oxidative stress and decreased by EGFR. Isoform 2 interacts with GRB2. A catalytically active cytoplasmic form (p65) is produced by proteolytic cleavage of either isoform 1, isoform 2 or isoform 3. Post-translationally, isoform 1 and isoform 2 are phosphorylated on tyrosine residues by tyrosine kinase Neu. In terms of processing, N-glycosylated. In terms of tissue distribution, isoform 1 is highly expressed in the brain, lung, spleen and testis. Isoform 2 is highly expressed in thymus, spleen and lung. Isoform 1 and isoform 2 are expressed in primary hepatocytes.

Its subcellular location is the cell membrane. It is found in the cytoplasm. It carries out the reaction O-phospho-L-tyrosyl-[protein] + H2O = L-tyrosyl-[protein] + phosphate. Its function is as follows. Isoform 1 plays a critical role in signaling transduction pathways and phosphoprotein network topology in red blood cells. May play a role in osteoclast formation and function. Acts as a negative regulator of insulin receptor (IR) signaling and is involved in insulin-induced glucose metabolism mainly through direct dephosphorylation and inactivation of IR in hepatocytes and liver. Functionally, isoform 2 acts as a negative regulator of insulin receptor (IR) signaling in skeletal muscle. Regulates insulin-induced tyrosine phosphorylation of insulin receptor (IR) and insulin receptor substrate 1 (IRS-1), phosphorylation of protein kinase B and glycogen synthase kinase-3 and insulin induced stimulation of glucose uptake. Isoform 1 and isoform 2 act as a negative regulator of FceRI-mediated signal transduction leading to cytokine production and degranulation, most likely by acting at the level of SYK to affect downstream events such as phosphorylation of SLP76 and LAT and mobilization of Ca(2+). In Rattus norvegicus (Rat), this protein is Receptor-type tyrosine-protein phosphatase epsilon (Ptpre).